Here is a 107-residue protein sequence, read N- to C-terminus: LDQRRRTFSFTGNSYFFIPSIHPSSLLSFLVSCCWPIGQERVARPASLRPRWHKPSTVLKVLNPRTVVILDHLGNNRTVSIDNLKPTSHQNGTTNDTATMDHLEKNE.

Polar residues predominate over residues 80–98 (SIDNLKPTSHQNGTTNDTA). Residues 80 to 107 (SIDNLKPTSHQNGTTNDTATMDHLEKNE) form a disordered region.

This is an uncharacterized protein from Human spumaretrovirus (SFVcpz(hu)).